We begin with the raw amino-acid sequence, 269 residues long: Tryptophan synthase alpha chain (269 aa).

Residues glutamate 49 and aspartate 60 each act as proton acceptor in the active site.

This sequence belongs to the TrpA family. As to quaternary structure, tetramer of two alpha and two beta chains.

It catalyses the reaction (1S,2R)-1-C-(indol-3-yl)glycerol 3-phosphate + L-serine = D-glyceraldehyde 3-phosphate + L-tryptophan + H2O. It functions in the pathway amino-acid biosynthesis; L-tryptophan biosynthesis; L-tryptophan from chorismate: step 5/5. Functionally, the alpha subunit is responsible for the aldol cleavage of indoleglycerol phosphate to indole and glyceraldehyde 3-phosphate. This chain is Tryptophan synthase alpha chain, found in Pseudomonas syringae pv. syringae.